The sequence spans 189 residues: Ribulose bisphosphate carboxylase small subunit, chloroplastic (189 aa).

The N-terminal 66 residues, 1–66 (MASSIMALSS…KTTSNGSRVR (66 aa)), are a transit peptide targeting the chloroplast.

Belongs to the RuBisCO small chain family. As to quaternary structure, heterohexadecamer of 8 large and 8 small subunits.

The protein localises to the plastid. Its subcellular location is the chloroplast. RuBisCO catalyzes two reactions: the carboxylation of D-ribulose 1,5-bisphosphate, the primary event in carbon dioxide fixation, as well as the oxidative fragmentation of the pentose substrate. Both reactions occur simultaneously and in competition at the same active site. Although the small subunit is not catalytic it is essential for maximal activity. The chain is Ribulose bisphosphate carboxylase small subunit, chloroplastic from Larix laricina (Tamarack).